The chain runs to 479 residues: MTAHDQELRRRAYEEVEKKEPIANSDPHRQHFHIMPPVGLLNDPNGVIYWKGSYHVFFQWQPFQTGHGAKFWGHYTTQDVVNWKREEIALAPSDWFDKNGCYSGSAVTKDDRLYLFYTGNVRDQDGNRETYQCLAVSDDGLSFEKKGVVARLPEGYTAHFRDPKVWEHEGTWYMVIGAQTENLKGQAVLFASDNLTEWRFLGPITGAGFNGLDDFGYMWECPDLFSLQGSDVLIVSPQGLEADGFRYQNVYQSGYFVGRLDYNKPELKHGEFTELDQGFDFYAPQTLEDDQGRRILFAWMAVPDQDEGSHPTIDCHWIHCMTLPRQLTLSGQKLIQQPLPELKAMRRNEKKIHINMHGSSGALPVEKPERTEILLEDIHTESGFSISIRGTATFSFHKDEGIVTLERKSFDGKRTEARHCRIKDLHTVHMFLDASSVEIFINNGEEVLSARYFPFPGNHEVTASATGKSEMNVGIWTLM.

Residues 1–28 (MTAHDQELRRRAYEEVEKKEPIANSDPH) form a disordered region. Residues 40–43 (LLND), Gln-59, 102–103 (YS), 161–162 (RD), and Glu-220 contribute to the substrate site. Residue Asp-43 is part of the active site.

It belongs to the glycosyl hydrolase 32 family.

The enzyme catalyses Hydrolysis of terminal non-reducing beta-D-fructofuranoside residues in beta-D-fructofuranosides.. The protein operates within glycan biosynthesis; sucrose metabolism. The sequence is that of Sucrose-6-phosphate hydrolase (sacA) from Bacillus subtilis (strain 168).